We begin with the raw amino-acid sequence, 5206 residues long: Multifunctional-autoprocessing repeats-in-toxin (5206 aa).

The first 19 residues, Met-1–Ala-19, serve as a signal peptide directing secretion. RtxA repeat units lie at residues Gly-101–Ser-118, Gly-121–Thr-138, Gly-141–Leu-157, Gly-161–Thr-184, Gly-187–Thr-204, Gly-207–Thr-224, Gly-255–His-272, Gly-275–Phe-291, Gly-584–Tyr-601, Gly-604–Thr-620, Gly-624–Thr-641, Gly-644–Gly-658, Ala-741–Gly-753, Met-759–Gly-771, Ala-782–Leu-798, Met-801–Thr-816, Met-820–Thr-835, Gly-841–Leu-855, Met-858–Ala-875, Met-877–Asn-891, Met-896–Asp-910, Met-915–Ala-932, Met-934–Leu-950, Met-972–Asn-984, Met-991–Ser-1006, Gly-1031–Leu-1043, Ala-1067–Asp-1079, Ala-1087–Val-1102, Gly-1110–Ile-1122, Ala-1125–Asn-1142, Trp-1145–Arg-1159, Ala-1163–Val-1179, Gly-1184–Thr-1199, Ala-1201–Val-1217, Ala-1220–Phe-1236, Lys-1242–Thr-1256, Ala-1258–Thr-1275, Ala-1296–Ala-1313, and Met-1315–Asn-1332. The segment covering Ser-1606 to Leu-1626 has biased composition (polar residues). Disordered regions lie at residues Ser-1606 to Ala-1682 and Ile-1738 to Ala-1895. The segment covering Ser-1627–Gln-1646 has biased composition (basic and acidic residues). Residues Gly-1652–Ala-1671 show a composition bias toward polar residues. Basic and acidic residues predominate over residues Ala-1778–Ala-1805. Polar residues predominate over residues Asn-1825 to Ala-1834. Positions Lys-1835–Gly-1849 are enriched in basic and acidic residues. Over residues Ser-1870–Ala-1880 the composition is skewed to polar residues. The segment at Glu-2377–Leu-2461 is membrane localization region (MLD). The segment at Glu-2537 to Leu-2901 is rho inactivation domain (RID). The segment at Val-2998–Ala-3113 is ABH effector region. The region spanning Pro-4111 to Trp-4295 is the Peptidase C80 domain. 1D-myo-inositol hexakisphosphate is bound by residues Glu-4117 to Arg-4119, Lys-4144 to His-4145, and Arg-4175. Residue His-4181 is the For cysteine protease activity of the active site. Ser-4226 lines the 1D-myo-inositol hexakisphosphate pocket. The active-site Nucleophile; for cysteine protease activity is Cys-4230. 1D-myo-inositol hexakisphosphate-binding positions include Ser-4259–Arg-4261, Arg-4272–Lys-4273, Lys-4285, and Lys-4290. 2 disordered regions span residues Gly-4333–Lys-4362 and Leu-4738–Asp-4779. The segment covering Ser-4750 to Ala-4762 has biased composition (low complexity).

Mg(2+) serves as cofactor.

Its subcellular location is the secreted. It localises to the host cytoplasm. The protein localises to the host cytosol. It is found in the host cell membrane. The catalysed reaction is L-lysyl-/S-(2E,6E,10E)-geranylgeranyl-L-cysteinyl-[protein] + hexadecanoyl-CoA = N(6)-hexadecanoyl-L-lysyl-/S-(2E,6E,10E)-geranylgeranyl-L-cysteinyl-[protein] + CoA + H(+). It carries out the reaction L-lysyl-/S-(2E,6E,10E)-geranylgeranyl-L-cysteinyl-[protein] + dodecanoyl-CoA = N(6)-dodecanoyl-L-lysyl-/S-(2E,6E,10E)-geranylgeranyl-L-cysteinyl-[protein] + CoA + H(+). It catalyses the reaction L-lysyl-/S-(2E,6E,10E)-geranylgeranyl-L-cysteinyl-[protein] + decanoyl-CoA = N(6)-decanoyl-L-lysyl-/S-(2E,6E,10E)-geranylgeranyl-L-cysteinyl-[protein] + CoA + H(+). Precursor of a multifunctional toxin that causes destruction of the actin cytoskeleton by covalent cross-linking of actin and inactivation of Rho GTPases when translocated into the host cytoplasm. Upon translocation into the host cell, undergoes autoprocessing in cis mediated by the peptidase C80 domain (also named CPD domain): the protease activity is activated upon binding inositol hexakisphosphate (InsP6) present at the host cell membrane and delivers the Cysteine protease domain-containing toxin F3 chain to the host cytosol. The Cysteine protease domain-containing toxin F3 chain will then further cleave and release effector toxin chains that cause disassembly of the actin cytoskeleton and enhance V.vulnificus colonization of the small intestine, possibly by facilitating evasion of phagocytic cells. Its function is as follows. Following autocatalytic cleavage in cis, this chain mediates processing in trans to release other individual toxin chains to the host cytosol. Released effector toxin chains cause disassembly of the actin cytoskeleton and enhance V.vulnificus colonization of the small intestine, possibly by facilitating evasion of phagocytic cells. In terms of biological role, actin-directed toxin that catalyzes the covalent cross-linking of host cytoplasmic monomeric actin. Mediates the cross-link between 'Lys-50' of one monomer and 'Glu-270' of another actin monomer, resulting in formation of highly toxic actin oligomers that cause cell rounding. The toxin can be highly efficient at very low concentrations by acting on formin homology family proteins: toxic actin oligomers bind with high affinity to formins and adversely affect both nucleation and elongation abilities of formins, causing their potent inhibition in both profilin-dependent and independent manners. Acts as an acid--amino-acid ligase that transfers the gamma-phosphoryl group of ATP to the 'Glu-270' actin residue, resulting in the formation of an activated acyl phosphate intermediate. This intermediate is further hydrolyzed and the energy of hydrolysis is utilized for the formation of the amide bond between actin subunits. Functionally, N-epsilon-fatty acyltransferase that mediates lysine-palmitoylation of host Rho GTPase proteins, with a strong preference for host Rac1. After delivery to the host cytosol, localizes to the host cell membrane where it palmitoylates host Rho GTPase proteins, resulting in loss of all active GTP-bound Rho and subsequent actin depolymerization. Prenylation of host Rac1 at the C-terminus is required for lysine-palmitoylation. Indirectly activates the small GTPase CDC42. This is Multifunctional-autoprocessing repeats-in-toxin from Vibrio vulnificus.